We begin with the raw amino-acid sequence, 72 residues long: Translational regulator CsrA (72 aa).

Belongs to the CsrA/RsmA family. As to quaternary structure, homodimer; the beta-strands of each monomer intercalate to form a hydrophobic core, while the alpha-helices form wings that extend away from the core.

Its subcellular location is the cytoplasm. In terms of biological role, a translational regulator that binds mRNA to regulate translation initiation and/or mRNA stability. Usually binds in the 5'-UTR at or near the Shine-Dalgarno sequence preventing ribosome-binding, thus repressing translation. Its main target seems to be the major flagellin gene, while its function is anatagonized by FliW. This is Translational regulator CsrA from Clostridium botulinum (strain Okra / Type B1).